The primary structure comprises 110 residues: ATP-dependent Clp protease adapter protein ClpS 2 (110 aa).

A disordered region spans residues 1-24 (MSNDENRSGSPTGPNTSVITKVKP). Polar residues predominate over residues 8 to 19 (SGSPTGPNTSVI).

The protein belongs to the ClpS family. As to quaternary structure, binds to the N-terminal domain of the chaperone ClpA.

Involved in the modulation of the specificity of the ClpAP-mediated ATP-dependent protein degradation. This chain is ATP-dependent Clp protease adapter protein ClpS 2, found in Bradyrhizobium diazoefficiens (strain JCM 10833 / BCRC 13528 / IAM 13628 / NBRC 14792 / USDA 110).